A 107-amino-acid polypeptide reads, in one-letter code: Thioredoxin-1 (107 aa).

Positions 2–106 constitute a Thioredoxin domain; it reads ASVRTMNDYH…LTNMMAKLVK (105 aa). Residues cysteine 31 and cysteine 34 each act as nucleophile in the active site. Cysteine 31 and cysteine 34 form a disulfide bridge.

The protein belongs to the thioredoxin family. Ovary specific. Expressed present in the nurse cells from stage 9 of ovary development and is transported into the oocyte. Expressed throughout oogenesis.

Its subcellular location is the nucleus. Participates in various redox reactions through the reversible oxidation of its active center dithiol to a disulfide and catalyzes dithiol-disulfide exchange reactions. As a reducing substrate of peroxiredoxin 1, thioredoxin 2 is preferred over thioredoxin 1. Required for female meiosis and early embryonic development. This Drosophila melanogaster (Fruit fly) protein is Thioredoxin-1 (dhd).